We begin with the raw amino-acid sequence, 125 residues long: Holo-[acyl-carrier-protein] synthase (125 aa).

Asp8 and Glu57 together coordinate Mg(2+).

It belongs to the P-Pant transferase superfamily. AcpS family. The cofactor is Mg(2+).

It is found in the cytoplasm. The catalysed reaction is apo-[ACP] + CoA = holo-[ACP] + adenosine 3',5'-bisphosphate + H(+). Transfers the 4'-phosphopantetheine moiety from coenzyme A to a Ser of acyl-carrier-protein. The chain is Holo-[acyl-carrier-protein] synthase from Azoarcus sp. (strain BH72).